The sequence spans 402 residues: UDP-N-acetylmuramoylalanine--D-glutamate ligase (402 aa).

An ATP-binding site is contributed by 97 to 103 (GTNGKTT).

This sequence belongs to the MurCDEF family.

Its subcellular location is the cytoplasm. It catalyses the reaction UDP-N-acetyl-alpha-D-muramoyl-L-alanine + D-glutamate + ATP = UDP-N-acetyl-alpha-D-muramoyl-L-alanyl-D-glutamate + ADP + phosphate + H(+). Its pathway is cell wall biogenesis; peptidoglycan biosynthesis. Its function is as follows. Cell wall formation. Catalyzes the addition of glutamate to the nucleotide precursor UDP-N-acetylmuramoyl-L-alanine (UMA). This chain is UDP-N-acetylmuramoylalanine--D-glutamate ligase, found in Campylobacter jejuni subsp. jejuni serotype O:23/36 (strain 81-176).